The following is a 305-amino-acid chain: MSWIERILNKSNITPTRKANIPEGVWTKCDSCGQVLYRAELERNLGVCPKCDHHMRLSARARLQAFLDKENTVELGSELEPKDVLKFRDSKKYKDRLVSAQKQSDEKDAMVVMKGTLYGMPIVVASFEFAFMGGSMASVVGARFVRAVEQALEDGCPLVCFSASGGARMQEALMSLMQMAKTSAALAKMRERGLPYISVLTDPTMGGVSASLAMLGDLNIAEPKALIGFAGPRVIEQTVREKLPPGFQRSEFLIEKGAIDMIVRRPEMRYKVATLLAKLTNHPEPGNDDVEIRSDAPSESSQDDA.

A CoA carboxyltransferase N-terminal domain is found at 25–294 (VWTKCDSCGQ…PGNDDVEIRS (270 aa)). Zn(2+) is bound by residues Cys29, Cys32, Cys48, and Cys51. The C4-type zinc finger occupies 29 to 51 (CDSCGQVLYRAELERNLGVCPKC). A disordered region spans residues 281–305 (NHPEPGNDDVEIRSDAPSESSQDDA).

It belongs to the AccD/PCCB family. Acetyl-CoA carboxylase is a heterohexamer composed of biotin carboxyl carrier protein (AccB), biotin carboxylase (AccC) and two subunits each of ACCase subunit alpha (AccA) and ACCase subunit beta (AccD). Zn(2+) serves as cofactor.

It localises to the cytoplasm. The enzyme catalyses N(6)-carboxybiotinyl-L-lysyl-[protein] + acetyl-CoA = N(6)-biotinyl-L-lysyl-[protein] + malonyl-CoA. It functions in the pathway lipid metabolism; malonyl-CoA biosynthesis; malonyl-CoA from acetyl-CoA: step 1/1. Its function is as follows. Component of the acetyl coenzyme A carboxylase (ACC) complex. Biotin carboxylase (BC) catalyzes the carboxylation of biotin on its carrier protein (BCCP) and then the CO(2) group is transferred by the transcarboxylase to acetyl-CoA to form malonyl-CoA. This is Acetyl-coenzyme A carboxylase carboxyl transferase subunit beta from Pectobacterium atrosepticum (strain SCRI 1043 / ATCC BAA-672) (Erwinia carotovora subsp. atroseptica).